Reading from the N-terminus, the 146-residue chain is Large ribosomal subunit protein uL11 (146 aa).

This sequence belongs to the universal ribosomal protein uL11 family. In terms of assembly, part of the ribosomal stalk of the 50S ribosomal subunit. Interacts with L10 and the large rRNA to form the base of the stalk. L10 forms an elongated spine to which L12 dimers bind in a sequential fashion forming a multimeric L10(L12)X complex. One or more lysine residues are methylated.

Its function is as follows. Forms part of the ribosomal stalk which helps the ribosome interact with GTP-bound translation factors. The polypeptide is Large ribosomal subunit protein uL11 (Corynebacterium kroppenstedtii (strain DSM 44385 / JCM 11950 / CIP 105744 / CCUG 35717)).